The following is a 246-amino-acid chain: Agamous-like MADS-box protein AGL5 (246 aa).

An MADS-box domain is found at 18–72 (RGKIEIKRIENTTNRQVTFCKRRNGLLKKAYELSVLCDAEVALVIFSTRGRLYEY). The region spanning 102–192 (TQYYQQEASK…RSKITERTGL (91 aa)) is the K-box domain.

Interacts with AGL15 and AGL16.

It localises to the nucleus. Its function is as follows. Probable transcription factor. Interacts genetically with TT16/AGL32 in a partially antagonistic manner during flower development. Is essential for the coordination of cell divisions in ovule, seed coat development and endosperm formation. This chain is Agamous-like MADS-box protein AGL5 (AGL5), found in Arabidopsis thaliana (Mouse-ear cress).